The chain runs to 276 residues: Glutamate 5-kinase (276 aa).

Lys14 lines the ATP pocket. Substrate-binding residues include Ser54, Asp141, and Asn157. Residues 177-178 (SD) and 219-225 (TGGMLTK) each bind ATP.

This sequence belongs to the glutamate 5-kinase family.

It is found in the cytoplasm. It carries out the reaction L-glutamate + ATP = L-glutamyl 5-phosphate + ADP. It functions in the pathway amino-acid biosynthesis; L-proline biosynthesis; L-glutamate 5-semialdehyde from L-glutamate: step 1/2. Its function is as follows. Catalyzes the transfer of a phosphate group to glutamate to form L-glutamate 5-phosphate. In Listeria innocua serovar 6a (strain ATCC BAA-680 / CLIP 11262), this protein is Glutamate 5-kinase.